The following is a 114-amino-acid chain: Protein lin-52 homolog (114 aa).

2 positions are modified to phosphoserine: S26 and S51.

This sequence belongs to the lin-52 family. In terms of assembly, component of the DREAM complex (also named LINC complex) at least composed of E2F4, E2F5, LIN9, LIN37, LIN52, LIN54, MYBL1, MYBL2, RBL1, RBL2, RBBP4, TFDP1 and TFDP2. The complex exists in quiescent cells where it represses cell cycle-dependent genes. It dissociates in S phase when LIN9, LIN37, LIN52 and LIN54 form a subcomplex that binds to MYBL2.

The polypeptide is Protein lin-52 homolog (LIN52) (Pongo abelii (Sumatran orangutan)).